The primary structure comprises 235 residues: Large ribosomal subunit protein uL1 (235 aa).

It belongs to the universal ribosomal protein uL1 family. As to quaternary structure, part of the 50S ribosomal subunit.

Binds directly to 23S rRNA. The L1 stalk is quite mobile in the ribosome, and is involved in E site tRNA release. Its function is as follows. Protein L1 is also a translational repressor protein, it controls the translation of the L11 operon by binding to its mRNA. The protein is Large ribosomal subunit protein uL1 of Paenarthrobacter aurescens (strain TC1).